A 502-amino-acid chain; its full sequence is UTP--glucose-1-phosphate uridylyltransferase 2 (502 aa).

Residues 1-20 form a disordered region; sequence MMKPDLNSPLPQSPQLQAFG. The span at 9–20 shows a compositional bias: polar residues; that stretch reads PLPQSPQLQAFG. Residues 114-117, lysine 128, glutamine 191, and glycine 220 each bind UTP; that span reads LNGG. Substrate is bound at residue 116 to 117; it reads GG. Residues histidine 221 and 249-251 each bind substrate; that span reads NVD. Residues aspartate 251 and lysine 390 each coordinate UTP.

It belongs to the UDPGP type 1 family.

It catalyses the reaction alpha-D-glucose 1-phosphate + UTP + H(+) = UDP-alpha-D-glucose + diphosphate. In terms of biological role, plays a central role as a glucosyl donor in cellular metabolic pathways. The protein is UTP--glucose-1-phosphate uridylyltransferase 2 (ugpB) of Dictyostelium discoideum (Social amoeba).